The sequence spans 1582 residues: SET-binding protein (1582 aa).

Disordered stretches follow at residues 1–76 (MEPR…WVAG), 124–246 (ITIK…KVPA), 278–416 (LLGS…KRQS), and 446–513 (SNSE…KLSE). A compositionally biased stretch (polar residues) spans 18-27 (EFLQGSSSRS). A compositionally biased stretch (basic and acidic residues) spans 57–74 (GSGRDVDCNSNADSEKWV). Composition is skewed to polar residues over residues 126 to 141 (IKQS…GKNS) and 213 to 229 (MEWS…QNCF). Over residues 278 to 298 (LLGSVVPSPSSHNSPATPSSS) the composition is skewed to low complexity. Positions 356 to 365 (ETTEGKREAY) are enriched in basic and acidic residues. Residues 368–388 (DSAQEASPARQSISSVSNPEN) show a composition bias toward polar residues. Residues 450-465 (GSKKDPRVPKLGKMIE) show a composition bias toward basic and acidic residues. A DNA-binding region (a.T hook 1) is located at residues 575 to 587 (KKKRGRPKKQPLL). Disordered regions lie at residues 595-617 (GTST…RKRR) and 709-787 (RGTI…ASTE). The span at 770–787 (LSTQLGGSNGNLSPASTE) shows a compositional bias: polar residues. At Lys808 the chain carries N6-acetyllysine. The span at 845-871 (SPVSESHSEETIPSDSGIGTDNNSTSD) shows a compositional bias: polar residues. The interval 845 to 880 (SPVSESHSEETIPSDSGIGTDNNSTSDQAEKSSESR) is disordered. The a.T hook 2 DNA-binding region spans 1007 to 1019 (KKKRGRPAKTNDT). Disordered regions lie at residues 1128–1155 (VGGA…DRIL), 1182–1215 (SGSD…VSKN), 1236–1265 (AKDK…TRSE), 1429–1461 (QRQS…RDQM), 1470–1489 (LPSK…EPAS), and 1507–1582 (EAPP…DVLP). Over residues 1137 to 1150 (RLHKRKHKHKRKHK) the composition is skewed to basic residues. Basic and acidic residues predominate over residues 1182 to 1196 (SGSDKELPLVSEKSK). Basic residues predominate over residues 1439 to 1448 (VKKRRGRPRK). The segment at residues 1440-1452 (KKRRGRPRKQPSQ) is a DNA-binding region (a.T hook 3). Composition is skewed to pro residues over residues 1509–1533 (PPLP…PPLP) and 1546–1559 (QPPA…PQPL).

Interacts with SET.

The protein localises to the nucleus. The sequence is that of SET-binding protein (Setbp1) from Mus musculus (Mouse).